Consider the following 326-residue polypeptide: Probable cell division protein WhiA (326 aa).

Positions 275 to 308 (SLEELGALADPPLTKDAIAGRIRRLLALADKRAR) form a DNA-binding region, H-T-H motif.

This sequence belongs to the WhiA family.

Involved in cell division and chromosome segregation. The chain is Probable cell division protein WhiA from Salinispora tropica (strain ATCC BAA-916 / DSM 44818 / JCM 13857 / NBRC 105044 / CNB-440).